The chain runs to 396 residues: NADH-quinone oxidoreductase subunit D (396 aa).

This sequence belongs to the complex I 49 kDa subunit family. In terms of assembly, NDH-1 is composed of 14 different subunits. Subunits NuoB, C, D, E, F, and G constitute the peripheral sector of the complex.

The protein resides in the cell inner membrane. The catalysed reaction is a quinone + NADH + 5 H(+)(in) = a quinol + NAD(+) + 4 H(+)(out). NDH-1 shuttles electrons from NADH, via FMN and iron-sulfur (Fe-S) centers, to quinones in the respiratory chain. The immediate electron acceptor for the enzyme in this species is believed to be ubiquinone. Couples the redox reaction to proton translocation (for every two electrons transferred, four hydrogen ions are translocated across the cytoplasmic membrane), and thus conserves the redox energy in a proton gradient. The polypeptide is NADH-quinone oxidoreductase subunit D (Bartonella henselae (strain ATCC 49882 / DSM 28221 / CCUG 30454 / Houston 1) (Rochalimaea henselae)).